Here is a 23-residue protein sequence, read N- to C-terminus: Acidic phospholipase CHA-E6a (23 aa).

This sequence belongs to the phospholipase A2 family. Group II subfamily. D49 sub-subfamily. It depends on Ca(2+) as a cofactor. Post-translationally, contains 7 disulfide bonds. As to expression, expressed by the venom gland.

Its subcellular location is the secreted. The catalysed reaction is a 1,2-diacyl-sn-glycero-3-phosphocholine + H2O = a 1-acyl-sn-glycero-3-phosphocholine + a fatty acid + H(+). Snake venom phospholipase A2 (PLA2) that shows high lipolytic (1048 umol/mg/min) and weak ADP-induced platelet aggregation activities. Also shows weak anticoagulant activity (IC(50) is less than 1.0 uM). PLA2 catalyzes the calcium-dependent hydrolysis of the 2-acyl groups in 3-sn-phosphoglycerides. The polypeptide is Acidic phospholipase CHA-E6a (Crotalus horridus (Timber rattlesnake)).